A 309-amino-acid chain; its full sequence is Putative ankyrin repeat protein R603 (309 aa).

7 ANK repeats span residues 53 to 82 (QVNGYFTYCVQKNKLDAIQYLYENNLMNPE), 83 to 112 (NKSQLFKIAIVHGNIDVLKLVIDYGIDVSL), 114 to 144 (DHFAITVCTRPISNTENIIQLLIDNGADVTS), 145 to 176 (NNNLPIKFAILKGTINKSVLDLLINNGADIHA), 177 to 206 (DEYFCAKYAAKCCYIFALKYIINLGIDVNM), 214 to 243 (NVLSDTAYSSNEYTYSCIKTLLENGADISF), and 245 to 274 (DDNDTLKMCRGSKTRNILILLLDYGFDISF).

In Acanthamoeba polyphaga (Amoeba), this protein is Putative ankyrin repeat protein R603.